A 768-amino-acid polypeptide reads, in one-letter code: Pentatricopeptide repeat-containing protein At4g01030, mitochondrial (768 aa).

The N-terminal 25 residues, 1-25 (MYRFLGLTIHGGLIKRGLDNSDTRV), are a transit peptide targeting the mitochondrion. PPR repeat units follow at residues 22 to 52 (DTRVVSASMGFYGRCVSLGFANKLFDEMPKR), 53 to 87 (DDLAWNEIVMVNLRSGNWEKAVELFREMQFSGAKA), 88 to 122 (YDSTMVKLLQVCSNKEGFAEGRQIHGYVLRLGLES), 123 to 153 (NVSMCNSLIVMYSRNGKLELSRKVFNSMKDR), 154 to 188 (NLSSWNSILSSYTKLGYVDDAIGLLDEMEICGLKP), 189 to 223 (DIVTWNSLLSGYASKGLSKDAIAVLKRMQIAGLKP), 224 to 254 (STSSISSLLQAVAEPGHLKLGKAIHGYILRN), 259 to 289 (DVYVETTLIDMYIKTGYLPYARMVFDMMDAK), 290 to 324 (NIVAWNSLVSGLSYACLLKDAEALMIRMEKEGIKP), 325 to 359 (DAITWNSLASGYATLGKPEKALDVIGKMKEKGVAP), 360 to 394 (NVVSWTAIFSGCSKNGNFRNALKVFIKMQEEGVGP), 395 to 429 (NAATMSTLLKILGCLSLLHSGKEVHGFCLRKNLIC), 430 to 460 (DAYVATALVDMYGKSGDLQSAIEIFWGIKNK), 461 to 495 (SLASWNCMLMGYAMFGRGEEGIAAFSVMLEAGMEP), 496 to 526 (DAITFTSVLSVCKNSGLVQEGWKYFDLMRSR), and 532 to 562 (TIEHCSCMVDLLGRSGYLDEAWDFIQTMSLK). Residues 567–642 (IWGAFLSSCK…QDLWSWIQID (76 aa)) are type E motif. Residues 643–673 (QTVHIFYAEGKTHPDEGDIYFELYKLVSEMK) are type E(+) motif. The segment at 674–768 (KSGYVPDTSC…DGKCSCNDSW (95 aa)) is type DYW motif.

The protein belongs to the PPR family. PCMP-H subfamily.

It is found in the mitochondrion. The chain is Pentatricopeptide repeat-containing protein At4g01030, mitochondrial (PCMP-H65) from Arabidopsis thaliana (Mouse-ear cress).